The sequence spans 345 residues: Probable fructokinase-3 (345 aa).

Belongs to the carbohydrate kinase PfkB family.

It catalyses the reaction D-fructose + ATP = D-fructose 6-phosphate + ADP + H(+). It participates in glycan biosynthesis; starch biosynthesis. May play an important role in maintaining the flux of carbon towards starch formation. The chain is Probable fructokinase-3 from Arabidopsis thaliana (Mouse-ear cress).